Here is a 106-residue protein sequence, read N- to C-terminus: MLVVTTNDLPGHRVQEVLGEVFGLTVRSRHLGSQIGAGLKSLVGGELRGLTKTLVETRNQAMERLVEQARARGANAVLSFRFDVTEAADVGTEVCAYGTAVVVARE.

It belongs to the UPF0145 family.

The polypeptide is UPF0145 protein SCO3412 (Streptomyces coelicolor (strain ATCC BAA-471 / A3(2) / M145)).